A 134-amino-acid chain; its full sequence is ATP synthase epsilon chain, chloroplastic (134 aa).

The protein belongs to the ATPase epsilon chain family. F-type ATPases have 2 components, CF(1) - the catalytic core - and CF(0) - the membrane proton channel. CF(1) has five subunits: alpha(3), beta(3), gamma(1), delta(1), epsilon(1). CF(0) has three main subunits: a, b and c.

It is found in the plastid. The protein resides in the chloroplast thylakoid membrane. In terms of biological role, produces ATP from ADP in the presence of a proton gradient across the membrane. In Pyropia yezoensis (Susabi-nori), this protein is ATP synthase epsilon chain, chloroplastic.